The following is a 374-amino-acid chain: Alcohol dehydrogenase class-3 (374 aa).

Alanine 2 is subject to N-acetylalanine. 7 residues coordinate Zn(2+): cysteine 45, histidine 67, cysteine 97, cysteine 100, cysteine 103, cysteine 111, and cysteine 174. Lysine 233 is modified (N6-succinyllysine). Serine 247 bears the Phosphoserine mark. An N6-succinyllysine modification is found at lysine 315. A phosphoserine mark is found at serine 324 and serine 351.

It belongs to the zinc-containing alcohol dehydrogenase family. Class-III subfamily. As to quaternary structure, homodimer. The cofactor is Zn(2+).

It is found in the cytoplasm. The enzyme catalyses a primary alcohol + NAD(+) = an aldehyde + NADH + H(+). It carries out the reaction a secondary alcohol + NAD(+) = a ketone + NADH + H(+). The catalysed reaction is S-(hydroxymethyl)glutathione + NADP(+) = S-formylglutathione + NADPH + H(+). It catalyses the reaction S-(hydroxymethyl)glutathione + NAD(+) = S-formylglutathione + NADH + H(+). The enzyme catalyses 20-oxo-(5Z,8Z,11Z,14Z)-eicosatetraenoate + NAD(+) + H2O = (5Z,8Z,11Z,14Z)-eicosatetraenedioate + NADH + 2 H(+). It carries out the reaction 20-hydroxy-(5Z,8Z,11Z,14Z)-eicosatetraenoate + NAD(+) = 20-oxo-(5Z,8Z,11Z,14Z)-eicosatetraenoate + NADH + H(+). The catalysed reaction is S-nitrosoglutathione + NADH + H(+) = S-(hydroxysulfenamide)glutathione + NAD(+). Functionally, catalyzes the oxidation of long-chain primary alcohols and the oxidation of S-(hydroxymethyl) glutathione. Also oxidizes long chain omega-hydroxy fatty acids, such as 20-HETE, producing both the intermediate aldehyde, 20-oxoarachidonate and the end product, a dicarboxylic acid, (5Z,8Z,11Z,14Z)-eicosatetraenedioate. Class-III ADH is remarkably ineffective in oxidizing ethanol. Required for clearance of cellular formaldehyde, a cytotoxic and carcinogenic metabolite that induces DNA damage. Also acts as a S-nitroso-glutathione reductase by catalyzing the NADH-dependent reduction of S-nitrosoglutathione, thereby regulating protein S-nitrosylation. The polypeptide is Alcohol dehydrogenase class-3 (Oryctolagus cuniculus (Rabbit)).